A 173-amino-acid chain; its full sequence is Ribosome maturation factor RimM (173 aa).

One can recognise a PRC barrel domain in the interval 98-170 (EDEYYWCDLL…RMTVSLPEGL (73 aa)).

The protein belongs to the RimM family. In terms of assembly, binds ribosomal protein uS19.

It localises to the cytoplasm. In terms of biological role, an accessory protein needed during the final step in the assembly of 30S ribosomal subunit, possibly for assembly of the head region. Essential for efficient processing of 16S rRNA. May be needed both before and after RbfA during the maturation of 16S rRNA. It has affinity for free ribosomal 30S subunits but not for 70S ribosomes. The protein is Ribosome maturation factor RimM of Geotalea uraniireducens (strain Rf4) (Geobacter uraniireducens).